We begin with the raw amino-acid sequence, 99 residues long: Protein Tat (99 aa).

An interaction with human CREBBP region spans residues 1 to 24 (MDPVDPKLEPWNHPGSQPQTACNN). The transactivation stretch occupies residues 1–48 (MDPVDPKLEPWNHPGSQPQTACNNCYCKKCCYHCQMCFLKKGLGISYG). Residues Cys-22, Cys-25, and Cys-27 each contribute to the Zn(2+) site. Positions 22–37 (CNNCYCKKCCYHCQMC) are cysteine-rich. Lys-28 is modified (N6-acetyllysine; by host PCAF). Cys-30, His-33, Cys-34, and Cys-37 together coordinate Zn(2+). A core region spans residues 38-48 (FLKKGLGISYG). A compositionally biased stretch (basic residues) spans 48–58 (GRKKRSQRHRT). The interval 48 to 99 (GRKKRSQRHRTPASLQDHQNSISKQPLSRTHGDPTGPKEQKKEVASKTETDP) is disordered. The Nuclear localization signal, RNA-binding (TAR), and protein transduction motif lies at 49 to 57 (RKKRSQRHR). Residues 49-86 (RKKRSQRHRTPASLQDHQNSISKQPLSRTHGDPTGPKE) are interaction with the host capping enzyme RNGTT. N6-acetyllysine; by host EP300 and GCN5L2 is present on residues Lys-50 and Lys-51. Arg-52 is modified (asymmetric dimethylarginine; by host PRMT6). The span at 60–75 (ASLQDHQNSISKQPLS) shows a compositional bias: polar residues. Residue Lys-71 forms a Glycyl lysine isopeptide (Lys-Gly) (interchain with G-Cter in ubiquitin) linkage. The span at 77 to 99 (THGDPTGPKEQKKEVASKTETDP) shows a compositional bias: basic and acidic residues.

This sequence belongs to the lentiviruses Tat family. Interacts with host CCNT1. Associates with the P-TEFb complex composed at least of Tat, P-TEFb (CDK9 and CCNT1), TAR RNA, RNA Pol II. Recruits the HATs CREBBP, TAF1/TFIID, EP300, PCAF and GCN5L2. Interacts with host KAT5/Tip60; this interaction targets the latter to degradation. Interacts with the host deacetylase SIRT1. Interacts with host capping enzyme RNGTT; this interaction stimulates RNGTT. Binds to host KDR, and to the host integrins ITGAV/ITGB3 and ITGA5/ITGB1. Interacts with host KPNB1/importin beta-1 without previous binding to KPNA1/importin alpha-1. Interacts with EIF2AK2. Interacts with host nucleosome assembly protein NAP1L1; this interaction may be required for the transport of Tat within the nucleus, since the two proteins interact at the nuclear rim. Interacts with host C1QBP/SF2P32; this interaction involves lysine-acetylated Tat. Interacts with the host chemokine receptors CCR2, CCR3 and CXCR4. Interacts with host DPP4/CD26; this interaction may trigger an anti-proliferative effect. Interacts with host LDLR. Interacts with the host extracellular matrix metalloproteinase MMP1. Interacts with host PRMT6; this interaction mediates Tat's methylation. Interacts with, and is ubiquitinated by MDM2/Hdm2. Interacts with host PSMC3 and HTATIP2. Interacts with STAB1; this interaction may overcome SATB1-mediated repression of IL2 and IL2RA (interleukin) in T cells by binding to the same domain than HDAC1. Interacts (when acetylated) with human CDK13, thereby increasing HIV-1 mRNA splicing and promoting the production of the doubly spliced HIV-1 protein Nef. Interacts with host TBP; this interaction modulates the activity of transcriptional pre-initiation complex. Interacts with host RELA. Interacts with host PLSCR1; this interaction negatively regulates Tat transactivation activity by altering its subcellular distribution. Asymmetrical arginine methylation by host PRMT6 seems to diminish the transactivation capacity of Tat and affects the interaction with host CCNT1. In terms of processing, acetylation by EP300, CREBBP, GCN5L2/GCN5 and PCAF regulates the transactivation activity of Tat. EP300-mediated acetylation of Lys-50 promotes dissociation of Tat from the TAR RNA through the competitive binding to PCAF's bromodomain. In addition, the non-acetylated Tat's N-terminus can also interact with PCAF. PCAF-mediated acetylation of Lys-28 enhances Tat's binding to CCNT1. Lys-50 is deacetylated by SIRT1. Post-translationally, polyubiquitination by host MDM2 does not target Tat to degradation, but activates its transactivation function and fosters interaction with CCNT1 and TAR RNA. Phosphorylated by EIF2AK2 on serine and threonine residues adjacent to the basic region important for TAR RNA binding and function. Phosphorylation of Tat by EIF2AK2 is dependent on the prior activation of EIF2AK2 by dsRNA.

Its subcellular location is the host nucleus. The protein resides in the host nucleolus. It localises to the host cytoplasm. It is found in the secreted. Functionally, transcriptional activator that increases RNA Pol II processivity, thereby increasing the level of full-length viral transcripts. Recognizes a hairpin structure at the 5'-LTR of the nascent viral mRNAs referred to as the transactivation responsive RNA element (TAR) and recruits the cyclin T1-CDK9 complex (P-TEFb complex) that will in turn hyperphosphorylate the RNA polymerase II to allow efficient elongation. The CDK9 component of P-TEFb and other Tat-activated kinases hyperphosphorylate the C-terminus of RNA Pol II that becomes stabilized and much more processive. Other factors such as HTATSF1/Tat-SF1, SUPT5H/SPT5, and HTATIP2 are also important for Tat's function. Besides its effect on RNA Pol II processivity, Tat induces chromatin remodeling of proviral genes by recruiting the histone acetyltransferases (HATs) CREBBP, EP300 and PCAF to the chromatin. This also contributes to the increase in proviral transcription rate, especially when the provirus integrates in transcriptionally silent region of the host genome. To ensure maximal activation of the LTR, Tat mediates nuclear translocation of NF-kappa-B by interacting with host RELA. Through its interaction with host TBP, Tat may also modulate transcription initiation. Tat can reactivate a latently infected cell by penetrating in it and transactivating its LTR promoter. In the cytoplasm, Tat is thought to act as a translational activator of HIV-1 mRNAs. Its function is as follows. Extracellular circulating Tat can be endocytosed by surrounding uninfected cells via the binding to several surface receptors such as CD26, CXCR4, heparan sulfate proteoglycans (HSPG) or LDLR. Neurons are rarely infected, but they internalize Tat via their LDLR. Through its interaction with nuclear HATs, Tat is potentially able to control the acetylation-dependent cellular gene expression. Modulates the expression of many cellular genes involved in cell survival, proliferation or in coding for cytokines or cytokine receptors. Tat plays a role in T-cell and neurons apoptosis. Tat induced neurotoxicity and apoptosis probably contribute to neuroAIDS. Circulating Tat also acts as a chemokine-like and/or growth factor-like molecule that binds to specific receptors on the surface of the cells, affecting many cellular pathways. In the vascular system, Tat binds to ITGAV/ITGB3 and ITGA5/ITGB1 integrins dimers at the surface of endothelial cells and competes with bFGF for heparin-binding sites, leading to an excess of soluble bFGF. The polypeptide is Protein Tat (Homo sapiens (Human)).